Reading from the N-terminus, the 463-residue chain is Cysteine--tRNA ligase (463 aa).

Cys28 contributes to the Zn(2+) binding site. The short motif at 30–40 (ITPYDLCHIGH) is the 'HIGH' region element. Zn(2+) contacts are provided by Cys211, His236, and Glu240. The 'KMSKS' region signature appears at 268 to 272 (KMSKS). Lys271 contributes to the ATP binding site.

It belongs to the class-I aminoacyl-tRNA synthetase family. Monomer. Zn(2+) serves as cofactor.

It localises to the cytoplasm. It catalyses the reaction tRNA(Cys) + L-cysteine + ATP = L-cysteinyl-tRNA(Cys) + AMP + diphosphate. This chain is Cysteine--tRNA ligase, found in Wigglesworthia glossinidia brevipalpis.